The chain runs to 588 residues: Probable urocanate hydratase (588 aa).

The segment covering 1–15 (MDTPSAAAETSEPSA) has biased composition (low complexity). Positions 1 to 22 (MDTPSAAAETSEPSAQWQAYRG) are disordered. NAD(+) contacts are provided by residues 62 to 63 (GG), Q140, 188 to 190 (GMG), E208, R213, 254 to 255 (NA), 275 to 279 (QTSAH), and Y334. C431 is an active-site residue. G520 contributes to the NAD(+) binding site.

Belongs to the urocanase family. Requires NAD(+) as cofactor.

It is found in the cytoplasm. The enzyme catalyses 4-imidazolone-5-propanoate = trans-urocanate + H2O. It functions in the pathway amino-acid degradation; L-histidine degradation into L-glutamate; N-formimidoyl-L-glutamate from L-histidine: step 2/3. Functionally, catalyzes the conversion of urocanate to 4-imidazolone-5-propionate. This chain is Probable urocanate hydratase, found in Halobacterium salinarum (strain ATCC 29341 / DSM 671 / R1).